The primary structure comprises 384 residues: Alkanesulfonate monooxygenase (384 aa).

It belongs to the SsuD family.

The catalysed reaction is an alkanesulfonate + FMNH2 + O2 = an aldehyde + FMN + sulfite + H2O + 2 H(+). In terms of biological role, catalyzes the desulfonation of aliphatic sulfonates. The chain is Alkanesulfonate monooxygenase from Burkholderia thailandensis (strain ATCC 700388 / DSM 13276 / CCUG 48851 / CIP 106301 / E264).